Consider the following 276-residue polypeptide: Formamidopyrimidine-DNA glycosylase (276 aa).

P2 serves as the catalytic Schiff-base intermediate with DNA. Catalysis depends on E3, which acts as the Proton donor. The Proton donor; for beta-elimination activity role is filled by K58. DNA-binding residues include H92, R111, and K154. The FPG-type zinc-finger motif lies at 239 to 273 (QVYGHVGEECPRCGNIFEKIKVSGRGTTFCPHCQV). Residue R263 is the Proton donor; for delta-elimination activity of the active site.

Belongs to the FPG family. In terms of assembly, monomer. It depends on Zn(2+) as a cofactor.

The catalysed reaction is Hydrolysis of DNA containing ring-opened 7-methylguanine residues, releasing 2,6-diamino-4-hydroxy-5-(N-methyl)formamidopyrimidine.. It catalyses the reaction 2'-deoxyribonucleotide-(2'-deoxyribose 5'-phosphate)-2'-deoxyribonucleotide-DNA = a 3'-end 2'-deoxyribonucleotide-(2,3-dehydro-2,3-deoxyribose 5'-phosphate)-DNA + a 5'-end 5'-phospho-2'-deoxyribonucleoside-DNA + H(+). Its function is as follows. Involved in base excision repair of DNA damaged by oxidation or by mutagenic agents. Acts as a DNA glycosylase that recognizes and removes damaged bases. Has a preference for oxidized purines, such as 7,8-dihydro-8-oxoguanine (8-oxoG). Has AP (apurinic/apyrimidinic) lyase activity and introduces nicks in the DNA strand. Cleaves the DNA backbone by beta-delta elimination to generate a single-strand break at the site of the removed base with both 3'- and 5'-phosphates. The polypeptide is Formamidopyrimidine-DNA glycosylase (Lactobacillus acidophilus (strain ATCC 700396 / NCK56 / N2 / NCFM)).